The primary structure comprises 132 residues: Auxin-responsive protein SAUR72 (132 aa).

The interval 22-54 (SDSQRPSRRSESFLRSSVTRRSKKQTSSVPEGH) is disordered. Basic and acidic residues predominate over residues 23-33 (DSQRPSRRSES).

Belongs to the ARG7 family. As to quaternary structure, interacts with and inhibits PP2C-D subfamily of type 2C phosphatases such as PP2C67/PP2C-D1. In terms of tissue distribution, highly expressed in the steles of roots and hypocotyls.

The protein resides in the cytoplasm. Provide a mechanistic link between auxin and plasma membrane H(+)-ATPases (PM H(+)-ATPases, e.g. AHA1 and AHA2), and triggers PM H(+)-ATPases activity by promoting phosphorylation of their C-terminal autoinhibitory domain as a result of PP2C-D subfamily of type 2C phosphatases inhibition, thus leading to the acidification of the apoplast and the facilitation of solutes and water uptake to drive cell expansion. Plays a role in the regulation of cell expansion, root meristem patterning and auxin transport. The polypeptide is Auxin-responsive protein SAUR72 (Arabidopsis thaliana (Mouse-ear cress)).